A 447-amino-acid chain; its full sequence is MYLLLLLIMLNMLMMSMIYLFMLFMNKMKNNLNLIIGNLIIINLLLNLFNLNWIDWIYIFCNLSFNMYSYGLIMLTLWIFGLIFISLNNNSLNCLFMNLLLMISLLLVFLSMNLLLFYLFYEFGLLLIFYLVVKWGYSENRWLSGFYLMFYTMIFSLPMLYIIYYIYLIDYSLNFMLMEMLNLNLNMMLFIYLLMSFLVKIPIYLFHGWLLKAHVEAPYYGSMILASIMLKLGGYGMLRLMIIYKNEFILIQKILVMINSFGVLILSLMCLSQFDMKSIIAISSIVHMGLMIMSMMTFLKISLIGGYLMMISHGLSSSGLFFLVNVIYSQTNSRLMFINKGMINFMPSMSLLWFMLCSSNMGSPVSLNLISEVMLLIGMISWLKFMMLILMMYCLFSFIYSIYLFMFINHGKIFIMFKIKNGILVEYFVLLLHWIPLNLMFLKLYFI.

Helical transmembrane passes span 4 to 24 (LLLL…FMLF), 34 to 54 (LIIG…LNWI), 67 to 87 (MYSY…FISL), 100 to 120 (LLMI…FYLF), 149 to 169 (MFYT…IYLI), 189 to 209 (LFIY…FHGW), 223 to 243 (MILA…LMII), 248 to 268 (FILI…ILSL), 279 to 299 (IIAI…MTFL), 304 to 324 (IGGY…FFLV), 349 to 371 (MSLL…NLIS), 388 to 408 (LILM…FMFI), and 422 to 442 (GILV…LMFL).

It belongs to the complex I subunit 4 family.

It is found in the mitochondrion membrane. It catalyses the reaction a ubiquinone + NADH + 5 H(+)(in) = a ubiquinol + NAD(+) + 4 H(+)(out). Functionally, core subunit of the mitochondrial membrane respiratory chain NADH dehydrogenase (Complex I) that is believed to belong to the minimal assembly required for catalysis. Complex I functions in the transfer of electrons from NADH to the respiratory chain. The immediate electron acceptor for the enzyme is believed to be ubiquinone. The sequence is that of NADH-ubiquinone oxidoreductase chain 4 (ND4) from Apis mellifera ligustica (Common honeybee).